The primary structure comprises 278 residues: Orotidine 5'-phosphate decarboxylase (278 aa).

Lys-95 acts as the Proton donor in catalysis.

It belongs to the OMP decarboxylase family. Type 2 subfamily.

The catalysed reaction is orotidine 5'-phosphate + H(+) = UMP + CO2. Its pathway is pyrimidine metabolism; UMP biosynthesis via de novo pathway; UMP from orotate: step 2/2. This Corynebacterium glutamicum (strain ATCC 13032 / DSM 20300 / JCM 1318 / BCRC 11384 / CCUG 27702 / LMG 3730 / NBRC 12168 / NCIMB 10025 / NRRL B-2784 / 534) protein is Orotidine 5'-phosphate decarboxylase.